Consider the following 405-residue polypeptide: Succinyl-CoA--L-malate CoA-transferase beta subunit (405 aa).

Asp175 serves as the catalytic Nucleophile.

The protein belongs to the CoA-transferase III family. In terms of assembly, forms a large complex composed of six heterodimers (alpha, beta).

The catalysed reaction is succinyl-CoA + (S)-malate = (S)-malyl-CoA + succinate. The enzyme catalyses (3S)-citramalate + succinyl-CoA = (3S)-citramalyl-CoA + succinate. In terms of biological role, involved in the 3-hydroxypropionate cycle used for autotrophic carbon dioxide fixation. Catalyzes the transfer of CoA moiety from succinyl-CoA to L-malate to yield L-malyl-CoA. This chain is Succinyl-CoA--L-malate CoA-transferase beta subunit (smtB), found in Chloroflexus aurantiacus (strain ATCC 29366 / DSM 635 / J-10-fl).